Here is a 144-residue protein sequence, read N- to C-terminus: MTLAFTTFAISKINNSSTNEDSKVMILCDEHHPFEKGYFKSAIRAFGNSIKLGLMGNSRPEDAASIFQDKNIPHDLTTEEFRLQLVCMAFSWFIFGLFIACLLLCITLVLTSRYPGENENKATEVVPSSNIDDEEKQLSLSDMI.

N-linked (GlcNAc...) asparagine glycosylation is found at asparagine 14 and asparagine 15. The helical transmembrane segment at 90 to 110 threads the bilayer; the sequence is FSWFIFGLFIACLLLCITLVL. A disordered region spans residues 120–144; sequence NKATEVVPSSNIDDEEKQLSLSDMI.

Its subcellular location is the membrane. This is an uncharacterized protein from Saccharomyces cerevisiae (strain ATCC 204508 / S288c) (Baker's yeast).